The sequence spans 863 residues: MFSSVFKAIFGTKNDREVKKYLKRVAQINALESKYQNLSDDELKQKFIDFKTQIQKEEKTLDQILNDVFAIVREVGKRTLNMRHFDVQLIGGMVLHEGKIAEMKTGEGKTLVATLPVVLNAMSGKGVHVVTVNDYLAKRDAEQMSAIYNFLGFSVGVILSEQNSDEAHKKAYECDITYGTNNEFGFDYLRDNMKFSKLEKVQREHHFVIVDEVDSILIDEARTPLIISGPTNRTLDGYIKANEVAKQMQKGQAATTPQELPSGDFVVDEKNRTIMITEAGISKAEKLFGVENLYSLDNAILAHQLDQALKAHNLFEKDVHYVLRDKEVVIVDEFTGRLSEGRRFSDGLHQALEAKENVKIQEESQTLADITFQNYFRMYKKLAGMTGTAQTEATEFSQIYNLDVVSIPTNIPVARIDKDDLIYKTQEEKFKAVIEEIKKANAKGQPVLVGTASIERSEVFHNMLVKERIPHHVLNAKNHEQEALIIQDAGKKGAVTIATNMAGRGVDIKIDDEVKALGGLYIIGTERHESRRIDNQLRGRAGRQGDPGVSRFYLSLEDNLLRIFGGDRIKNIMERLGIEEGEHIESRIVTRAVENAQKKVESLHFESRKHLLEYDDVANEQRKTIYNYRNELLDEEFDLQDKILKNIAEYSNHLVSQIYLNAELEDDVKHFESLKQKVSYECNLELNEVDFKDLGVIEVENKLSEILEKVYKDKMSIIEDKEARRIERILYLQILDNLWREHLYQMDILKTGIGLRSYNQKDPLVEYKKESYNLFMELVERIKFDSLKLLFNVAFTQQQAQNFEEKSHEQNEQFLSNTTESGVNENGEAQITKVPRNSPCPCGSGKKYKECHGKSGPKKGILA.

ATP-binding positions include Gln-88, 106-110 (GEGKT), and Asp-507. Positions 806-863 (KSHEQNEQFLSNTTESGVNENGEAQITKVPRNSPCPCGSGKKYKECHGKSGPKKGILA) are disordered. The span at 812–829 (EQFLSNTTESGVNENGEA) shows a compositional bias: polar residues. 4 residues coordinate Zn(2+): Cys-840, Cys-842, Cys-851, and His-852.

The protein belongs to the SecA family. Monomer and homodimer. Part of the essential Sec protein translocation apparatus which comprises SecA, SecYEG and auxiliary proteins SecDF-YajC and YidC. Requires Zn(2+) as cofactor.

The protein resides in the cell inner membrane. Its subcellular location is the cytoplasm. The enzyme catalyses ATP + H2O + cellular proteinSide 1 = ADP + phosphate + cellular proteinSide 2.. In terms of biological role, part of the Sec protein translocase complex. Interacts with the SecYEG preprotein conducting channel. Has a central role in coupling the hydrolysis of ATP to the transfer of proteins into and across the cell membrane, serving as an ATP-driven molecular motor driving the stepwise translocation of polypeptide chains across the membrane. The polypeptide is Protein translocase subunit SecA (Campylobacter lari (strain RM2100 / D67 / ATCC BAA-1060)).